The following is a 180-amino-acid chain: Large ribosomal subunit protein uL6 (180 aa).

The protein belongs to the universal ribosomal protein uL6 family. Part of the 50S ribosomal subunit.

This protein binds to the 23S rRNA, and is important in its secondary structure. It is located near the subunit interface in the base of the L7/L12 stalk, and near the tRNA binding site of the peptidyltransferase center. The protein is Large ribosomal subunit protein uL6 of Borreliella burgdorferi (strain ATCC 35210 / DSM 4680 / CIP 102532 / B31) (Borrelia burgdorferi).